Consider the following 105-residue polypeptide: Small ribosomal subunit protein uS10 (105 aa).

This sequence belongs to the universal ribosomal protein uS10 family. As to quaternary structure, part of the 30S ribosomal subunit.

Its function is as follows. Involved in the binding of tRNA to the ribosomes. The sequence is that of Small ribosomal subunit protein uS10 from Anaplasma phagocytophilum (strain HZ).